Consider the following 1450-residue polypeptide: Auxilin-like protein 1 (1450 aa).

Disordered regions lie at residues 117–142 (NEDK…GKKS), 241–318 (STRD…AESS), 357–383 (DSKI…SQIL), 459–480 (NSKQ…TKQE), 512–541 (SQKD…SQEM), 556–575 (EETP…EKSE), 908–946 (DRSE…RSSF), 961–1046 (EQHR…ELEH), 1077–1168 (GAAT…ERKQ), 1192–1241 (AGKT…AERA), and 1254–1328 (AMEK…SDRA). Residues 316-344 (ESSAALKKAIEEAQIRMNIAKQMMEKKKS) are a coiled coil. Residues 357-366 (DSKIENKGNT) show a composition bias toward basic and acidic residues. 7 stretches are compositionally biased toward basic and acidic residues: residues 512–524 (SQKD…EKEN), 564–575 (SKSEMNIEEKSE), 908–923 (DRSE…RFDQ), 1037–1046 (RNGDKKELEH), 1117–1131 (NMKE…RSSM), 1147–1168 (ETVE…ERKQ), and 1192–1226 (AGKT…KLSS). 2 coiled-coil regions span residues 1142-1184 (SQNK…RERA) and 1219-1257 (EVND…AMEK). The span at 1270–1299 (SYGGSKSFSSSGERRGSSSSGTENKSSGPS) shows a compositional bias: low complexity. A compositionally biased stretch (basic and acidic residues) spans 1310 to 1328 (PIQRCKARSERHQRTSDRA). Residues 1327–1355 (RAAEALAEKKLRDLKTQKEQTERNRLAEA) are a coiled coil. In terms of domain architecture, J spans 1377–1450 (TLQYILGAES…AWNKFGADER (74 aa)).

The chain is Auxilin-like protein 1 (AUL1) from Arabidopsis thaliana (Mouse-ear cress).